Here is a 205-residue protein sequence, read N- to C-terminus: Adenylate kinase (205 aa).

10 to 15 contributes to the ATP binding site; the sequence is GAGKGT. The segment at 30–59 is NMP; sequence STGDMLRAAVAQGSEVGKVAEGIMARGELV. Residues Thr-31, Arg-36, 57-59, 85-88, and Gln-92 each bind AMP; these read ELV and GFPR. The interval 126-139 is LID; the sequence is TRAAETAGGPRADD. Arg-127 provides a ligand contact to ATP. The AMP site is built by Arg-136 and Arg-147. Position 175 (Lys-175) interacts with ATP.

The protein belongs to the adenylate kinase family. As to quaternary structure, monomer.

The protein resides in the cytoplasm. It catalyses the reaction AMP + ATP = 2 ADP. It participates in purine metabolism; AMP biosynthesis via salvage pathway; AMP from ADP: step 1/1. Its function is as follows. Catalyzes the reversible transfer of the terminal phosphate group between ATP and AMP. Plays an important role in cellular energy homeostasis and in adenine nucleotide metabolism. The protein is Adenylate kinase of Parvibaculum lavamentivorans (strain DS-1 / DSM 13023 / NCIMB 13966).